The primary structure comprises 493 residues: ATP synthase subunit beta, chloroplastic (493 aa).

G170–T177 is a binding site for ATP.

It belongs to the ATPase alpha/beta chains family. In terms of assembly, F-type ATPases have 2 components, CF(1) - the catalytic core - and CF(0) - the membrane proton channel. CF(1) has five subunits: alpha(3), beta(3), gamma(1), delta(1), epsilon(1). CF(0) has four main subunits: a(1), b(1), b'(1) and c(9-12).

It is found in the plastid. Its subcellular location is the chloroplast thylakoid membrane. The catalysed reaction is ATP + H2O + 4 H(+)(in) = ADP + phosphate + 5 H(+)(out). Functionally, produces ATP from ADP in the presence of a proton gradient across the membrane. The catalytic sites are hosted primarily by the beta subunits. This is ATP synthase subunit beta, chloroplastic from Chaetosphaeridium globosum (Charophycean green alga).